Reading from the N-terminus, the 460-residue chain is Serine incorporator 5 (460 aa).

Over 1–36 (MCTPCCVSQLACCCGSAACSLCCGCCPKIKQSTSTR) the chain is Extracellular. A helical transmembrane segment spans residues 37 to 57 (FMYALFFMLVTVTCVIMMSPT). The Cytoplasmic portion of the chain corresponds to 58–89 (VEMAMREHIPFYSQMCQQLNAGENCSTLVGYS). The chain crosses the membrane as a helical span at residues 90–110 (AVYKVCFGMACFFFFFAVFTI). Topologically, residues 111–124 (RVQNSTGCRAAVHN) are extracellular. Asn-114 carries N-linked (GlcNAc...) asparagine glycosylation. A helical membrane pass occupies residues 125-145 (GFWFFKFVALLACCAGGFFLP). At 146–156 (NQDQFLEVWRY) the chain is on the cytoplasmic side. A helical membrane pass occupies residues 157-177 (VGAAGGFLFIIIQLMLLVQFA). Residues 178 to 197 (HRWNQNWSSGATYNKLWYAA) are Extracellular-facing. An N-linked (GlcNAc...) asparagine glycan is attached at Asn-183. A helical transmembrane segment spans residues 198–218 (LALVTLVLFSVAVGGMVFMFM). The Cytoplasmic segment spans residues 219 to 230 (YYTHPEACFLNK). Residues 231–251 (IFLGVNGGLCFIVSLLAISPC) traverse the membrane as a helical segment. Residues 252-259 (IQTFQPTS) lie on the Extracellular side of the membrane. The chain crosses the membrane as a helical span at residues 260–280 (GLLQPAVITLYVMYLTFSALA). The Cytoplasmic portion of the chain corresponds to 281-311 (SKPIEMVEDEIKGNITVCVFPFKSGLKSDTN). A helical membrane pass occupies residues 312-332 (IVTGVGTAILFCCILYSCLIS). Residues 333 to 391 (TTKRSSAALQVYRNDMPENERARCCFCWVDDTEDYDDEKTSGGQNVKYDERDGTVYSYC) lie on the Extracellular side of the membrane. The helical transmembrane segment at 392 to 412 (FFHFVFFLGSLYVMMTVTNWF) threads the bilayer. Residues 413-433 (HYDNAKIERLLEGSWSVFWIK) lie on the Cytoplasmic side of the membrane. The helical transmembrane segment at 434-454 (MASSWVCLFFYMWTLVVPMLF) threads the bilayer. Residues 455–460 (PQRFQA) lie on the Extracellular side of the membrane.

The protein belongs to the TDE1 family.

The protein resides in the cell membrane. The catalysed reaction is a 1,2-diacyl-sn-glycero-3-phospho-L-serine(in) = a 1,2-diacyl-sn-glycero-3-phospho-L-serine(out). The enzyme catalyses a 1,2-diacyl-sn-glycero-3-phosphocholine(in) = a 1,2-diacyl-sn-glycero-3-phosphocholine(out). It carries out the reaction a 1,2-diacyl-sn-glycero-3-phosphoethanolamine(in) = a 1,2-diacyl-sn-glycero-3-phosphoethanolamine(out). In terms of biological role, restriction factor required to restrict infectivity of gammaretroviruses: acts by inhibiting an early step of viral infection. Impairs the penetration of the viral particle into the cytoplasm. Non-ATP-dependent, non-specific lipid transporter for phosphatidylserine, phosphatidylcholine, and phosphatidylethanolamine. Functions as a scramblase that flips lipids in both directions across the membrane. Phospholipid scrambling results in gammaretroviral surface exposure of phosphatidylserine and loss of membrane asymmetry, which leads to loss of infectivity. Enhances the incorporation of serine into phosphatidylserine and sphingolipids. This chain is Serine incorporator 5 (serinc5), found in Danio rerio (Zebrafish).